The sequence spans 558 residues: Ribonuclease J (558 aa).

Residues histidine 81, histidine 83, aspartate 85, histidine 86, histidine 148, and aspartate 170 each coordinate Zn(2+). Position 371–375 (371–375) interacts with substrate; it reads HVSGH. Histidine 397 is a binding site for Zn(2+).

It belongs to the metallo-beta-lactamase superfamily. RNA-metabolizing metallo-beta-lactamase-like family. Bacterial RNase J subfamily. Homodimer, may be a subunit of the RNA degradosome. It depends on Zn(2+) as a cofactor.

The protein resides in the cytoplasm. Its function is as follows. An RNase that has 5'-3' exonuclease and possibly endoonuclease activity. Involved in maturation of rRNA and in some organisms also mRNA maturation and/or decay. The protein is Ribonuclease J of Mycobacterium tuberculosis (strain CDC 1551 / Oshkosh).